The following is a 111-amino-acid chain: Cytochrome c oxidase subunit 6A1, mitochondrial (111 aa).

A mitochondrion-targeting transit peptide spans 1–26 (MASAVLSASRVSRPLGRALPGLRRPM). Residues 27-36 (SSGAHGEEGS) are Mitochondrial matrix-facing. The chain crosses the membrane as a helical span at residues 37 to 61 (ARMWKALTYFVALPGVGVSMLNVFL). Residues 62 to 111 (KSRHEEHERPPFVAYPHLRIRTKPFPWGDGNHTLFHNPHVNPLPTGYEDE) are Mitochondrial intermembrane-facing.

This sequence belongs to the cytochrome c oxidase subunit 6A family. Component of the cytochrome c oxidase (complex IV, CIV), a multisubunit enzyme composed of 14 subunits. The complex is composed of a catalytic core of 3 subunits MT-CO1, MT-CO2 and MT-CO3, encoded in the mitochondrial DNA, and 11 supernumerary subunits COX4I, COX5A, COX5B, COX6A, COX6B, COX6C, COX7A, COX7B, COX7C, COX8 and NDUFA4, which are encoded in the nuclear genome. The complex exists as a monomer or a dimer and forms supercomplexes (SCs) in the inner mitochondrial membrane with NADH-ubiquinone oxidoreductase (complex I, CI) and ubiquinol-cytochrome c oxidoreductase (cytochrome b-c1 complex, complex III, CIII), resulting in different assemblies (supercomplex SCI(1)III(2)IV(1) and megacomplex MCI(2)III(2)IV(2)).

It localises to the mitochondrion inner membrane. The protein operates within energy metabolism; oxidative phosphorylation. In terms of biological role, component of the cytochrome c oxidase, the last enzyme in the mitochondrial electron transport chain which drives oxidative phosphorylation. The respiratory chain contains 3 multisubunit complexes succinate dehydrogenase (complex II, CII), ubiquinol-cytochrome c oxidoreductase (cytochrome b-c1 complex, complex III, CIII) and cytochrome c oxidase (complex IV, CIV), that cooperate to transfer electrons derived from NADH and succinate to molecular oxygen, creating an electrochemical gradient over the inner membrane that drives transmembrane transport and the ATP synthase. Cytochrome c oxidase is the component of the respiratory chain that catalyzes the reduction of oxygen to water. Electrons originating from reduced cytochrome c in the intermembrane space (IMS) are transferred via the dinuclear copper A center (CU(A)) of subunit 2 and heme A of subunit 1 to the active site in subunit 1, a binuclear center (BNC) formed by heme A3 and copper B (CU(B)). The BNC reduces molecular oxygen to 2 water molecules unsing 4 electrons from cytochrome c in the IMS and 4 protons from the mitochondrial matrix. This is Cytochrome c oxidase subunit 6A1, mitochondrial (Cox6a1) from Mus musculus (Mouse).